A 344-amino-acid chain; its full sequence is Trace amine-associated receptor 8c (344 aa).

Over methionine 1–methionine 36 the chain is Extracellular. Residues asparagine 4 and asparagine 18 are each glycosylated (N-linked (GlcNAc...) asparagine). Intrachain disulfides connect cysteine 21/cysteine 185 and cysteine 96/cysteine 189. The chain crosses the membrane as a helical span at residues valine 37 to leucine 57. Residues histidine 58–asparagine 67 lie on the Cytoplasmic side of the membrane. A helical membrane pass occupies residues phenylalanine 68–serine 88. The Extracellular segment spans residues methionine 89 to threonine 102. The chain crosses the membrane as a helical span at residues phenylalanine 103–valine 127. The Cytoplasmic portion of the chain corresponds to aspartate 128 to serine 146. The chain crosses the membrane as a helical span at residues valine 147–phenylalanine 167. The Extracellular portion of the chain corresponds to tyrosine 168–aspartate 196. The helical transmembrane segment at tryptophan 197 to serine 217 threads the bilayer. Topologically, residues lysine 218–threonine 260 are cytoplasmic. A helical membrane pass occupies residues leucine 261 to isoleucine 281. Over aspartate 282–glutamate 295 the chain is Extracellular. The chain crosses the membrane as a helical span at residues phenylalanine 296 to phenylalanine 319. The Cytoplasmic segment spans residues arginine 320 to glutamate 344.

The protein belongs to the G-protein coupled receptor 1 family.

It is found in the cell membrane. Its function is as follows. Olfactory receptor activated by trace amines, such as N-methylpiperidine and N,N-dimethylcyclohexylamine. Trace amine compounds are enriched in animal body fluids and act on trace amine-associated receptors (TAARs) to elicit both intraspecific and interspecific innate behaviors. Ligand-binding causes a conformation change that triggers signaling via G(s)-class of G alpha proteins (GNAL or GNAS). The protein is Trace amine-associated receptor 8c of Rattus norvegicus (Rat).